The following is a 94-amino-acid chain: C-C motif chemokine 26 (94 aa).

The N-terminal stretch at 1-23 (MMGLSLASAVLLASLLSLHLGTA) is a signal peptide. Cystine bridges form between Cys33–Cys57 and Cys34–Cys73.

The protein belongs to the intercrine beta (chemokine CC) family. Monomer. In terms of tissue distribution, ubiquitously expressed at low levels in various tissues including heart and ovary.

It is found in the secreted. Chemoattractant for eosinophils and basophils. Acts as a ligand for C-C chemokine receptor CCR3 which triggers Ca(2+) mobilization in eosinophils. Also acts as a ligand for CX3C chemokine receptor CX3CR1, inducing cell chemotaxis. This Homo sapiens (Human) protein is C-C motif chemokine 26.